A 31-amino-acid polypeptide reads, in one-letter code: Cyclotide Hyfl-A (31 aa).

The segment at residues 1-31 (SISCGESCVYIPCTVTALVGCTCKDKVCYLN) is a cross-link (cyclopeptide (Ser-Asn)). 3 disulfide bridges follow: Cys4/Cys21, Cys8/Cys23, and Cys13/Cys28.

It belongs to the cyclotide family. Bracelet subfamily. This is a cyclic peptide.

Its function is as follows. Probably participates in a plant defense mechanism. This is Cyclotide Hyfl-A from Hybanthus floribundus (Greenviolet).